A 49-amino-acid chain; its full sequence is Light-harvesting protein B800/850/890 alpha-3 chain (49 aa).

At 1-14 (MNQARIWLVVKPSV) the chain is on the cytoplasmic side. Residues 15–35 (GLPLLLGVVLLIALLVHGAIL) form a helical membrane-spanning segment. Histidine 31 contributes to the a bacteriochlorophyll binding site. The Periplasmic portion of the chain corresponds to 36–49 (TNTSWYPTYFEGNW).

The protein belongs to the antenna complex alpha subunit family. In terms of assembly, the core complex is formed by different alpha and beta chains, binding bacteriochlorophyll molecules, and arranged most probably in tetrameric structures disposed around the reaction center. The non-pigmented gamma chains may constitute additional components.

The protein resides in the cell inner membrane. Antenna complexes are light-harvesting systems, which transfer the excitation energy to the reaction centers. The polypeptide is Light-harvesting protein B800/850/890 alpha-3 chain (Halorhodospira halophila (strain DSM 244 / SL1) (Ectothiorhodospira halophila (strain DSM 244 / SL1))).